We begin with the raw amino-acid sequence, 193 residues long: Protein Syd (193 aa).

The protein belongs to the Syd family.

The protein resides in the cell inner membrane. Interacts with the SecY protein in vivo. May bind preferentially to an uncomplexed state of SecY, thus functioning either as a chelating agent for excess SecY in the cell or as a regulatory factor that negatively controls the translocase function. This Tolumonas auensis (strain DSM 9187 / NBRC 110442 / TA 4) protein is Protein Syd.